The following is a 289-amino-acid chain: Pantothenate synthetase (289 aa).

Residue 30 to 37 coordinates ATP; sequence MGYLHKGH. Histidine 37 functions as the Proton donor in the catalytic mechanism. (R)-pantoate is bound at residue glutamine 61. Glutamine 61 provides a ligand contact to beta-alanine. 147–150 contacts ATP; sequence GEKD. Position 153 (glutamine 153) interacts with (R)-pantoate. ATP is bound by residues valine 176 and 184–187; that span reads CSSR.

It belongs to the pantothenate synthetase family. Homodimer.

The protein resides in the cytoplasm. It carries out the reaction (R)-pantoate + beta-alanine + ATP = (R)-pantothenate + AMP + diphosphate + H(+). It functions in the pathway cofactor biosynthesis; (R)-pantothenate biosynthesis; (R)-pantothenate from (R)-pantoate and beta-alanine: step 1/1. Functionally, catalyzes the condensation of pantoate with beta-alanine in an ATP-dependent reaction via a pantoyl-adenylate intermediate. This is Pantothenate synthetase from Allorhizobium ampelinum (strain ATCC BAA-846 / DSM 112012 / S4) (Agrobacterium vitis (strain S4)).